The following is a 470-amino-acid chain: Pheromone a factor receptor (470 aa).

Residues 1 to 5 (MSYKS) lie on the Extracellular side of the membrane. A helical membrane pass occupies residues 6–23 (AIIGLCLLAVILLAPPLA). At 24 to 29 (WHSHTK) the chain is on the cytoplasmic side. The chain crosses the membrane as a helical span at residues 30–53 (NIPAIILITWLLTMNLTCIVDAAI). Residues 54–70 (WSDDDFLTRWDGKGWCD) lie on the Extracellular side of the membrane. Residues 71-98 (IVIKLQVGANIGISCAVTNIIYNLHTIL) traverse the membrane as a helical segment. The Cytoplasmic segment spans residues 99 to 116 (KADSVLPDLSSWTKIVKD). A helical membrane pass occupies residues 117-134 (LVISLFTPVMVMGFSYLL). Over 135–155 (QVFRYGIARYNGCQNLLSPTW) the chain is Extracellular. Residues 156–183 (ITTVLYTMWMLIWSFVGAVYATLVLFVF) traverse the membrane as a helical segment. Residues 184–205 (YKKRKDVRDILHCTNSGLNLTR) are Cytoplasmic-facing. The helical transmembrane segment at 206–228 (FARLLIFCFIIILVMFPFSVYTF) threads the bilayer. The Extracellular segment spans residues 229-266 (VQDLQQVEGHYTFKNTHSSTIWNTIIKFDPGRPIYNIW). A helical transmembrane segment spans residues 267–285 (LYVLMSYLVFLIFGLGSDA). Residues 286-470 (LHMYSKFLRS…EHSSENTAGP (185 aa)) lie on the Cytoplasmic side of the membrane. The interval 300-470 (FVLDMWKRFI…EHSSENTAGP (171 aa)) is hydrophilic. Residues 440 to 470 (NFEGESLCYSPASKEENSSSNEHSSENTAGP) form a disordered region.

The protein belongs to the G-protein coupled receptor 4 family.

Its subcellular location is the membrane. Receptor for the peptide pheromone a factor. This chain is Pheromone a factor receptor (STE3), found in Saccharomyces cerevisiae (strain ATCC 204508 / S288c) (Baker's yeast).